The primary structure comprises 151 residues: UPF0208 membrane protein YfbV (151 aa).

A run of 2 helical transmembrane segments spans residues 46–65 (YAIRFMPPIAVFTLCWQIAL) and 69–91 (LGPAVATALFALSLPMQGLWWLG).

The protein belongs to the UPF0208 family.

It localises to the cell inner membrane. In Shigella flexneri serotype 5b (strain 8401), this protein is UPF0208 membrane protein YfbV.